Reading from the N-terminus, the 432-residue chain is Adenylosuccinate synthetase (432 aa).

GTP-binding positions include 13 to 19 (GDEGKGK) and 41 to 43 (GHT). Catalysis depends on aspartate 14, which acts as the Proton acceptor. Mg(2+) is bound by residues aspartate 14 and glycine 41. IMP is bound by residues 14 to 17 (DEGK), 39 to 42 (NAGH), threonine 130, arginine 144, glutamine 225, threonine 240, and arginine 304. Histidine 42 acts as the Proton donor in catalysis. 300–306 (ATTGRRR) serves as a coordination point for substrate. GTP is bound by residues arginine 306, 332–334 (KLD), and 415–417 (STG).

This sequence belongs to the adenylosuccinate synthetase family. Homodimer. The cofactor is Mg(2+).

The protein localises to the cytoplasm. The catalysed reaction is IMP + L-aspartate + GTP = N(6)-(1,2-dicarboxyethyl)-AMP + GDP + phosphate + 2 H(+). Its pathway is purine metabolism; AMP biosynthesis via de novo pathway; AMP from IMP: step 1/2. Functionally, plays an important role in the de novo pathway of purine nucleotide biosynthesis. Catalyzes the first committed step in the biosynthesis of AMP from IMP. The sequence is that of Adenylosuccinate synthetase from Pectobacterium carotovorum subsp. carotovorum (strain PC1).